A 151-amino-acid polypeptide reads, in one-letter code: Ribosome maturation factor RimP (151 aa).

The protein belongs to the RimP family.

It localises to the cytoplasm. Required for maturation of 30S ribosomal subunits. The chain is Ribosome maturation factor RimP from Desulfotalea psychrophila (strain LSv54 / DSM 12343).